The following is a 708-amino-acid chain: Metal-pseudopaline receptor CntO (708 aa).

The signal sequence occupies residues 1 to 21 (MRVSVSLVLGVGLGCSSPALW). The 107-residue stretch at 63–169 (RIEDIPQAIS…PGGTVNLVTK (107 aa)) folds into the TBDR plug domain. One can recognise a TBDR beta-barrel domain in the interval 174–708 (ERFARLHASA…NLTMSLTLNY (535 aa)).

This sequence belongs to the TonB-dependent receptor family.

It is found in the cell outer membrane. In terms of biological role, transports the metallophore pseudopaline, which is involved in the acquisition of nickel and zinc, and thus enables bacterial growth inside the host, where metal access is limited. Is probably involved in the import of pseudopaline-metal complexes. This Pseudomonas aeruginosa (strain ATCC 15692 / DSM 22644 / CIP 104116 / JCM 14847 / LMG 12228 / 1C / PRS 101 / PAO1) protein is Metal-pseudopaline receptor CntO.